The primary structure comprises 554 residues: HMG box-containing protein 4 (554 aa).

Disordered stretches follow at residues 15 to 368 and 417 to 469; these read GTED…AYQV and HKQN…PAKV. The segment covering 75 to 88 has biased composition (basic and acidic residues); it reads SSDDYHADHSTDSA. Residues 95 to 105 show a composition bias toward low complexity; it reads SLPSPSSSDTA. A compositionally biased stretch (polar residues) spans 113–123; it reads TSPQADTSTTH. 2 stretches are compositionally biased toward basic and acidic residues: residues 145 to 154 and 217 to 226; these read PHKDYHKKSG and LGREEIESRS. Residues 236 to 251 are compositionally biased toward polar residues; that stretch reads YTPRSGGTPDSASSTG. Positions 268 to 296 are enriched in basic residues; the sequence is MKKKKKSKKSKKKKDKHKDEKHKKHSKSK. Positions 313-332 are enriched in pro residues; the sequence is LPSPPPPPATTPPTSPPSIP. Residues 341–357 are compositionally biased toward basic and acidic residues; sequence HTEEQSDKKKKKEDPEK. The segment at residues 359–427 is a DNA-binding region (HMG box); the sequence is KKKNMSAYQV…KQNKAEATTV (69 aa). Low complexity-rich tracts occupy residues 433–445 and 454–467; these read SSES…GSSS and SPTS…TSPA.

In terms of assembly, interacts with nlk.2.

The protein localises to the nucleus. Negatively regulates Wnt/beta-catenin signaling during development. The protein is HMG box-containing protein 4 (hmgxb4) of Xenopus laevis (African clawed frog).